Reading from the N-terminus, the 141-residue chain is Hemoglobin subunit alpha (141 aa).

In terms of domain architecture, Globin spans 1 to 141 (VLSATDKANV…VATVLTSKYR (141 aa)). The residue at position 3 (Ser3) is a Phosphoserine. Residues Lys7 and Lys11 each carry the N6-succinyllysine modification. The residue at position 16 (Lys16) is an N6-acetyllysine; alternate. N6-succinyllysine; alternate is present on Lys16. Position 24 is a phosphotyrosine (Tyr24). Lys40 carries the post-translational modification N6-succinyllysine. Residue His58 participates in O2 binding. A heme b-binding site is contributed by His87. Ser102 carries the phosphoserine modification. A Phosphothreonine modification is found at Thr108. At Ser124 the chain carries Phosphoserine. Phosphothreonine occurs at positions 134 and 137. Phosphoserine is present on Ser138.

Belongs to the globin family. As to quaternary structure, heterotetramer of two alpha chains and two beta chains. As to expression, red blood cells.

In terms of biological role, involved in oxygen transport from the lung to the various peripheral tissues. Its function is as follows. Hemopressin acts as an antagonist peptide of the cannabinoid receptor CNR1. Hemopressin-binding efficiently blocks cannabinoid receptor CNR1 and subsequent signaling. In Erinaceus europaeus (Western European hedgehog), this protein is Hemoglobin subunit alpha (HBA).